The primary structure comprises 627 residues: Dual specificity testis-specific protein kinase 1 (627 aa).

The segment at 1 to 36 (MAGERPPLRGPGPGEAPGEGPGGAGGGPGRGRPSSY) is disordered. A compositionally biased stretch (gly residues) spans 11 to 30 (PGPGEAPGEGPGGAGGGPGR). Residues 52-309 (FDCAEKIGAG…TEITQHLEQI (258 aa)) enclose the Protein kinase domain. ATP contacts are provided by residues 58–66 (IGAGFFSEV) and Lys-81. Asp-170 acts as the Proton acceptor in catalysis. Ser-215 carries the phosphoserine; by autocatalysis modification. Residues 316-330 (ATPLAKPPLTKAPLT) show a composition bias toward low complexity. Disordered regions lie at residues 316-373 (ATPL…SWGD), 436-485 (RCRS…GLAP), 500-519 (CSSA…NNNP), and 532-565 (REPW…EPEE). Arg-338 is subject to Omega-N-methylarginine. Positions 348–357 (PDPRLSRSRS) are enriched in basic and acidic residues. Residues 421 to 525 (VTTPDILVQP…NNNPPAVVVN (105 aa)) are required for interaction with YWHAB. A required for interaction with PARVA region spans residues 528 to 625 (QGWAREPWNR…PTPSLQLPGA (98 aa)). A required for interaction with SPRED1 and SPRY2. Required for TESK1-mediated dephosphorylation of SPRY2 and SPRY2 inhibition of ERK phosphorylation region spans residues 528–627 (QGWAREPWNR…PSLQLPGARS (100 aa)).

The protein belongs to the protein kinase superfamily. TKL Ser/Thr protein kinase family. Interacts (via both C- and N-termini) with SPRY4 (via C-terminus); the interaction inhibits TESK1 kinase activity. Interacts with TAOK1; the interaction inhibits TAOK1 kinase activity. Interacts (via C-terminus) with SPRED1 (via C-terminus); the interaction inhibits TESK1 kinase activity. Interacts (via C-terminus) with PARVA/PARVIN (via C-terminus); the interaction inhibits TESK1 kinase activity. Interacts with YWHAB/14-3-3 beta; the interaction is dependent on the phosphorylation of TESK1 Ser-439 and inhibits TESK1 kinase activity. Interacts with SPRY1, SPRY3 and SPRED2. Interacts (via C-terminus) with SPRY2 (via C-terminus); the interaction disrupts SPRY2 interaction with PPP2CA/PP2A-C, possibly by vesicular sequestration of SPRY2. Therefore dephosphorylation of SPRY2 by the serine/threonine-protein phosphatase 2A (PP2A) holoenzyme is lost, inhibiting its interaction with GRB2. It depends on Mg(2+) as a cofactor. Mn(2+) is required as a cofactor. In terms of processing, autophosphorylated on serine and tyrosine residues. Expressed in testes and brain (at protein level).

The protein resides in the cytoplasm. It is found in the perinuclear region. The protein localises to the cytoskeleton. Its subcellular location is the microtubule organizing center. It localises to the centrosome. The protein resides in the cell projection. It is found in the lamellipodium. The enzyme catalyses L-seryl-[protein] + ATP = O-phospho-L-seryl-[protein] + ADP + H(+). The catalysed reaction is L-threonyl-[protein] + ATP = O-phospho-L-threonyl-[protein] + ADP + H(+). It carries out the reaction L-tyrosyl-[protein] + ATP = O-phospho-L-tyrosyl-[protein] + ADP + H(+). Activated by autophosphorylation on Ser-215. Kinase activity is inhibited by SPRED1. Dual specificity protein kinase activity catalyzing autophosphorylation and phosphorylation of exogenous substrates on both serine/threonine and tyrosine residues. Regulates the cellular cytoskeleton by enhancing actin stress fiber formation via phosphorylation of cofilin and by preventing microtubule breakdown via inhibition of TAOK1/MARKK kinase activity. Inhibits podocyte motility via regulation of actin cytoskeletal dynamics and phosphorylation of CFL1. Positively regulates integrin-mediated cell spreading, via phosphorylation of cofilin. Suppresses ciliogenesis via multiple pathways; phosphorylation of CFL1, suppression of ciliary vesicle directional trafficking to the ciliary base, and by facilitating YAP1 nuclear localization where it acts as a transcriptional corepressor of the TEAD4 target genes AURKA and PLK1. Probably plays a central role at and after the meiotic phase of spermatogenesis. The sequence is that of Dual specificity testis-specific protein kinase 1 (Tesk1) from Mus musculus (Mouse).